Consider the following 637-residue polypeptide: Penicillin-binding protein 1A (637 aa).

The tract at residues 62 to 224 is transglycosylase; it reads LIADLGSERR…NQYDPYSHPE (163 aa). The active-site Proton donor; for transglycosylase activity is E91. Positions 298–612 are transpeptidase; the sequence is EVYTNVDSKV…RLTPIVGDGF (315 aa). The Acyl-ester intermediate; for transpeptidase activity role is filled by S371.

It in the N-terminal section; belongs to the glycosyltransferase 51 family. The protein in the C-terminal section; belongs to the transpeptidase family.

The protein localises to the secreted. The enzyme catalyses [GlcNAc-(1-&gt;4)-Mur2Ac(oyl-L-Ala-gamma-D-Glu-L-Lys-D-Ala-D-Ala)](n)-di-trans,octa-cis-undecaprenyl diphosphate + beta-D-GlcNAc-(1-&gt;4)-Mur2Ac(oyl-L-Ala-gamma-D-Glu-L-Lys-D-Ala-D-Ala)-di-trans,octa-cis-undecaprenyl diphosphate = [GlcNAc-(1-&gt;4)-Mur2Ac(oyl-L-Ala-gamma-D-Glu-L-Lys-D-Ala-D-Ala)](n+1)-di-trans,octa-cis-undecaprenyl diphosphate + di-trans,octa-cis-undecaprenyl diphosphate + H(+). The catalysed reaction is Preferential cleavage: (Ac)2-L-Lys-D-Ala-|-D-Ala. Also transpeptidation of peptidyl-alanyl moieties that are N-acyl substituents of D-alanine.. Its pathway is cell wall biogenesis; peptidoglycan biosynthesis. Cell wall formation. In Streptococcus oralis, this protein is Penicillin-binding protein 1A (ponA).